We begin with the raw amino-acid sequence, 894 residues long: Translation initiation factor IF-2 (894 aa).

The tract at residues 25 to 304 (ADAGMNKASS…KPTSMQHGFD (280 aa)) is disordered. Composition is skewed to basic and acidic residues over residues 33–44 (SSDHVSDEEKQK), 52–62 (EHGDKSGESEP), 101–174 (STIE…KEMN), 184–239 (AKKE…ENSD), and 247–263 (YARE…EGGA). Over residues 283–293 (RGGKGRNKGKL) the composition is skewed to basic residues. A tr-type G domain is found at 393-562 (PRAPVVTIMG…LLQSEVLELT (170 aa)). Residues 402-409 (GHVDHGKT) are G1. 402-409 (GHVDHGKT) contacts GTP. A G2 region spans residues 427–431 (GITQH). Residues 448 to 451 (DTPG) form a G3 region. GTP-binding positions include 448–452 (DTPGH) and 502–505 (NKID). The G4 stretch occupies residues 502–505 (NKID). The segment at 538-540 (SAK) is G5.

The protein belongs to the TRAFAC class translation factor GTPase superfamily. Classic translation factor GTPase family. IF-2 subfamily.

The protein resides in the cytoplasm. In terms of biological role, one of the essential components for the initiation of protein synthesis. Protects formylmethionyl-tRNA from spontaneous hydrolysis and promotes its binding to the 30S ribosomal subunits. Also involved in the hydrolysis of GTP during the formation of the 70S ribosomal complex. The chain is Translation initiation factor IF-2 from Vibrio campbellii (strain ATCC BAA-1116).